The following is a 319-amino-acid chain: Ribonuclease Z (319 aa).

Zn(2+) contacts are provided by His-62, His-64, Asp-66, His-67, His-139, Asp-209, and His-268. Residue Asp-66 is the Proton acceptor of the active site.

This sequence belongs to the RNase Z family. In terms of assembly, homodimer. Requires Zn(2+) as cofactor.

It carries out the reaction Endonucleolytic cleavage of RNA, removing extra 3' nucleotides from tRNA precursor, generating 3' termini of tRNAs. A 3'-hydroxy group is left at the tRNA terminus and a 5'-phosphoryl group is left at the trailer molecule.. Zinc phosphodiesterase, which displays some tRNA 3'-processing endonuclease activity. Probably involved in tRNA maturation, by removing a 3'-trailer from precursor tRNA. This is Ribonuclease Z from Pseudomonas putida (strain GB-1).